Reading from the N-terminus, the 128-residue chain is Prokineticin-2 (128 aa).

The N-terminal stretch at 1–26 (MGDPRCAPLLLLLLLPLLFTPPAGDA) is a signal peptide. Cystine bridges form between Cys-33–Cys-45, Cys-39–Cys-57, Cys-44–Cys-106, Cys-67–Cys-114, and Cys-108–Cys-124.

It belongs to the AVIT (prokineticin) family. Expressed in the SCN and among a few other discrete brain areas, including the islands of Calleja, media l preoptic area of the hypothalamus and the shell of the nucleus accumbens. Highly expressed in testis. In the SCN, expression subjected to high amplitude of circadian oscillation.

The protein resides in the secreted. Functionally, may function as an output molecule from the suprachiasmatic nucleus (SCN) that transmits behavioral circadian rhythm. May also function locally within the SCN to synchronize output. Potently contracts gastrointestinal (GI) smooth muscle. In Mus musculus (Mouse), this protein is Prokineticin-2 (Prok2).